The primary structure comprises 352 residues: Ubiquitin thioesterase otulin (352 aa).

The disordered stretch occupies residues 1–49 (MSRGTMPQPGAWPGASCAETPAREAGAAARDGGKVTAGAQPRAATRCPA). Residues 18–30 (AETPAREAGAAAR) show a composition bias toward low complexity. The stretch at 49–73 (AEHEEDMYRAADEIEKEKELLIHER) forms a coiled coil. Residues 52–57 (EEDMYR) carry the PIM motif motif. Tyr-56 is modified (phosphotyrosine). Linear diubiquitin binding stretches follow at residues 95 to 96 (EW) and 124 to 126 (RGD). An OTU domain is found at 118–346 (TSIRRVRGDN…DRHYNIPVRV (229 aa)). The active site involves Asp-126. Cys-129 acts as the Nucleophile in catalysis. Linear diubiquitin binding regions lie at residues 255–259 (FFSVL), 283–289 (TGGLEQV), and 336–338 (DDR). His-339 is a catalytic residue. The PDZ-binding motif lies at 349 to 352 (ETSV).

It belongs to the peptidase C65 family. Otulin subfamily. Interacts (via the PUB domain) with RNF31 (via the PIM motif); the interaction is direct. Interacts with DVL2. In terms of processing, ubiquitinated. Acetylated. Post-translationally, phosphorylated. Phosphorylation at Tyr-56 prevents interaction with RNF31; dephosphorylation promotes interaction with RNF31 and the LUBAC complex.

The protein resides in the cytoplasm. The enzyme catalyses Thiol-dependent hydrolysis of ester, thioester, amide, peptide and isopeptide bonds formed by the C-terminal Gly of ubiquitin (a 76-residue protein attached to proteins as an intracellular targeting signal).. In terms of biological role, deubiquitinase that specifically removes linear ('Met-1'-linked) polyubiquitin chains to substrates and acts as a regulator of angiogenesis and innate immune response. Required during angiogenesis, craniofacial and neuronal development by regulating the canonical Wnt signaling together with the LUBAC complex. Acts as a negative regulator of NF-kappa-B by regulating the activity of the LUBAC complex. OTULIN function is mainly restricted to homeostasis of the LUBAC complex: acts by removing 'Met-1'-linked autoubiquitination of the LUBAC complex, thereby preventing inactivation of the LUBAC complex. Acts as a key negative regulator of inflammation by restricting spontaneous inflammation and maintaining immune homeostasis. In myeloid cell, required to prevent unwarranted secretion of cytokines leading to inflammation and autoimmunity by restricting linear polyubiquitin formation. Plays a role in innate immune response by restricting linear polyubiquitin formation on LUBAC complex in response to NOD2 stimulation, probably to limit NOD2-dependent pro-inflammatory signaling. The polypeptide is Ubiquitin thioesterase otulin (Mus musculus (Mouse)).